The primary structure comprises 226 residues: Putative uroporphyrinogen-III synthase (226 aa).

It belongs to the uroporphyrinogen-III synthase family.

It carries out the reaction hydroxymethylbilane = uroporphyrinogen III + H2O. Its pathway is porphyrin-containing compound metabolism; protoporphyrin-IX biosynthesis; coproporphyrinogen-III from 5-aminolevulinate: step 3/4. Its function is as follows. Catalyzes cyclization of the linear tetrapyrrole, hydroxymethylbilane, to the macrocyclic uroporphyrinogen III. The polypeptide is Putative uroporphyrinogen-III synthase (Archaeoglobus fulgidus (strain ATCC 49558 / DSM 4304 / JCM 9628 / NBRC 100126 / VC-16)).